Here is a 419-residue protein sequence, read N- to C-terminus: UPF0229 protein TERTU_3150 (419 aa).

The tract at residues 63 to 111 (IFHHGSGGKNNRVLPGNDRFNGGDHIERPEQGQGGGGNGSGASDSGEGE) is disordered. Basic and acidic residues predominate over residues 83-92 (NGGDHIERPE).

Belongs to the UPF0229 family.

The protein is UPF0229 protein TERTU_3150 of Teredinibacter turnerae (strain ATCC 39867 / T7901).